The following is a 632-amino-acid chain: tRNA uridine 5-carboxymethylaminomethyl modification enzyme MnmG (632 aa).

FAD is bound by residues 15–20, Val127, and Ser182; that span reads GAGHAG. NAD(+) is bound at residue 276–290; that stretch reads GARYCPSIEDKIVRF. Residue Gln373 participates in FAD binding.

This sequence belongs to the MnmG family. As to quaternary structure, homodimer. Heterotetramer of two MnmE and two MnmG subunits. FAD is required as a cofactor.

It is found in the cytoplasm. In terms of biological role, NAD-binding protein involved in the addition of a carboxymethylaminomethyl (cmnm) group at the wobble position (U34) of certain tRNAs, forming tRNA-cmnm(5)s(2)U34. This chain is tRNA uridine 5-carboxymethylaminomethyl modification enzyme MnmG, found in Enterococcus faecalis (strain ATCC 700802 / V583).